The chain runs to 187 residues: Flavin prenyltransferase UbiX (187 aa).

Residues 9-11, Ser34, and Arg123 each bind FMN; that span reads GAS. Residues Tyr153 and Lys169 each contribute to the dimethylallyl phosphate site.

It belongs to the UbiX/PAD1 family.

It catalyses the reaction dimethylallyl phosphate + FMNH2 = prenylated FMNH2 + phosphate. Its function is as follows. Flavin prenyltransferase that catalyzes the synthesis of the prenylated FMN cofactor (prenyl-FMN) for 4-hydroxy-3-polyprenylbenzoic acid decarboxylase UbiD. The prenyltransferase is metal-independent and links a dimethylallyl moiety from dimethylallyl monophosphate (DMAP) to the flavin N5 and C6 atoms of FMN. In Helicobacter pylori (strain ATCC 700392 / 26695) (Campylobacter pylori), this protein is Flavin prenyltransferase UbiX.